The primary structure comprises 478 residues: Protein adenylyltransferase VbhT (478 aa).

The Fido domain occupies 55–200 (FDLDHMKKIH…RRNLTEFTVN (146 aa)). ATP is bound by residues 85–88 (KDNS), 133–136 (NALH), 140–147 (EGNGRTLR), and serine 175.

Homodimer. Interacts with VbhA.

It catalyses the reaction L-tyrosyl-[protein] + ATP = O-(5'-adenylyl)-L-tyrosyl-[protein] + diphosphate. The enzyme catalyses L-threonyl-[protein] + ATP = 3-O-(5'-adenylyl)-L-threonyl-[protein] + diphosphate. Its activity is regulated as follows. Adenylyltransferase activity is inhibited by antitoxin VbhA; which acts by competing with ATP-binding at Arg-147 and prevents productive ATP-binding. Its function is as follows. Toxic component of type II toxin-antitoxin (TA) system VbhT-VbhA. Adenylyltransferase involved in virulence by mediating the addition of adenosine 5'-monophosphate (AMP) to specific residue of host GTPases. The resulting AMPylation affects GTPases, impairing actin assembly in infected cells. This chain is Protein adenylyltransferase VbhT (vbhT), found in Bartonella schoenbuchensis (strain DSM 13525 / NCTC 13165 / R1).